The following is a 282-amino-acid chain: Insulin-like growth factor-binding protein 7 (282 aa).

An N-terminal signal peptide occupies residues 1-26 (MERPSLRALLLGAAGLLLLLLPLSSS). One can recognise an IGFBP N-terminal domain in the interval 28 to 114 (SSDTCGPCEP…PGVSGVCVCK (87 aa)). Cystine bridges form between Cys-32–Cys-57, Cys-35–Cys-59, Cys-40–Cys-60, Cys-48–Cys-63, Cys-71–Cys-87, Cys-81–Cys-111, and Cys-120–Cys-156. Positions 105–158 (PGVSGVCVCKSRYPVCGSDGTTYPSGCQLRAASQRAESRGEKAITQVSKGTCEQ) constitute a Kazal-like domain. Positions 160–264 (PSIVTPPKDI…GQASASAKIT (105 aa)) constitute an Ig-like C2-type domain. A glycan (N-linked (GlcNAc...) asparagine) is linked at Asn-171. Cys-181 and Cys-248 are oxidised to a cystine. Phosphoserine; by FAM20C is present on Ser-239.

In terms of assembly, may interact with VPS24/CHMP3; the relevance of such interaction however remains unclear. Interacts with CD93; this interaction plays a role in endothelial cells angiogenesis. In terms of processing, N-glycosylated.

The protein localises to the secreted. Its function is as follows. Binds IGF1 and IGF2 with a relatively low affinity. Stimulates prostacyclin (PGI2) production. Stimulates cell adhesion. Acts as a ligand for CD93 to play a role in angiogenesis. This Homo sapiens (Human) protein is Insulin-like growth factor-binding protein 7 (IGFBP7).